The following is a 691-amino-acid chain: Replication and transcription activator (691 aa).

2 O-linked (GlcNAc) threonine; by host glycosylation sites follow: Thr366 and Thr367. Disordered stretches follow at residues 482-582 and 626-677; these read EASG…SLPP and LDTP…QESG. Residues 504-513 show a composition bias toward low complexity; that stretch reads TAAATAAEAT. A compositionally biased stretch (basic residues) spans 515–531; the sequence is PKRKQRSKERSSKKRKA. A compositionally biased stretch (low complexity) spans 539–556; the sequence is TTPSTTTPGTSLGSITTP. Over residues 655–677 the composition is skewed to polar residues; the sequence is EYTQLQPVRATSATPANEVQESG.

The protein belongs to the herpesviridae TAF50 family. In terms of assembly, homotetramer. Interacts with KTA/ORF57. Interacts with host PARP1; this interaction negatively regulates RTA/ORF50 transactivation activity. Interacts with host SMC5 and SMC6; these interactions remove the repressive chromatin structure to allow viral reactivation. Interacts with host POU2F1; this interaction enhances RTA/ORF50-mediated transactivation of several viral promoters including K-bZIP promoter.

The protein resides in the host nucleus. It catalyses the reaction S-ubiquitinyl-[E2 ubiquitin-conjugating enzyme]-L-cysteine + [acceptor protein]-L-lysine = [E2 ubiquitin-conjugating enzyme]-L-cysteine + N(6)-ubiquitinyl-[acceptor protein]-L-lysine.. Functionally, transcriptional transactivator that is necessary and sufficient for reactivation of the virus from latency. Acts post-transcriptionally and transcriptionally to regulate viral lytic gene expression and synergistically with ORF57 activates certain early and late viral promoters including its own promoter. Autostimulation on its promoter is mediated by the formation of a ternary complex between ORF50 and the cellular components HGMB1 and POU2F1. Also possesses a bimodal activity in targeting proteins for degradation through using its own E3 ligase activity or by stabilizing and chaperoning host E3 ligases. These activities help to subvert the host innate and adaptive immune responses while also modulating the host transcriptome and protein landscape to promote virus production. For instance, targets the host SMC5/6 complex for ubiquitination and subsequent degradation through the ubiquitin-proteasome during reactivation while during latency, host SMC5/6 complex binds to the viral episome and condenses viral chromatin, creating a repressive chromatin structure to silence genome transcription. Hijacks the cellular E3 ligase complex RNF20/40 to increase the level of transcriptionally active RNA polymerase II on viral gene promoters thereby facilitating lytic gene expression. Acts as a SUMO-targeting ubiquitin ligase and affects general sumoylation of cellular proteins. Promotes the polyubiquitination and subsequent degradation of host MYD88 and thereby inhibits MYD88-mediated TLR4 signaling. Induces the degradation of vFLIP/ORF71 together with cellular ubiquitin ligase ITCH to prevent vFLIP-induced NF-kappa-B signaling. The sequence is that of Replication and transcription activator (ORF50) from Homo sapiens (Human).